Here is a 56-residue protein sequence, read N- to C-terminus: Large ribosomal subunit protein eL37 (56 aa).

Zn(2+) is bound by residues Cys-19, Cys-22, Cys-34, and Cys-37. The segment at Cys-19–Cys-37 adopts a C4-type zinc-finger fold.

It belongs to the eukaryotic ribosomal protein eL37 family. It depends on Zn(2+) as a cofactor.

Functionally, binds to the 23S rRNA. The polypeptide is Large ribosomal subunit protein eL37 (Methanococcoides burtonii (strain DSM 6242 / NBRC 107633 / OCM 468 / ACE-M)).